Consider the following 98-residue polypeptide: Phosphoribosyl-ATP pyrophosphatase (98 aa).

The protein belongs to the PRA-PH family.

The protein resides in the cytoplasm. The catalysed reaction is 1-(5-phospho-beta-D-ribosyl)-ATP + H2O = 1-(5-phospho-beta-D-ribosyl)-5'-AMP + diphosphate + H(+). The protein operates within amino-acid biosynthesis; L-histidine biosynthesis; L-histidine from 5-phospho-alpha-D-ribose 1-diphosphate: step 2/9. In Haloarcula marismortui (strain ATCC 43049 / DSM 3752 / JCM 8966 / VKM B-1809) (Halobacterium marismortui), this protein is Phosphoribosyl-ATP pyrophosphatase.